The sequence spans 615 residues: MAVYLGMLRLGRLCVASLGARGPRTPLSRPWPNSKLQGVRAFSSGMVDCTNPLPIGGLSYIQGHTDSHLVNKTVGECLDATAQRFPNREALVIIHENIRLNFAQLKEEVDRAASGLLSIGLRKGDRLGMWGPNSYAWVLIQLATAQAGIILVSVNPAYQASELEYVLRKVGCKGIVFPKQFKTQQYYNILKQVCPELEKAQPGALKSERLPDLTTVISVDAPLPGTLLLDEVVAAGGKEQNLAQLRYHQGFLSCYDPINIQFTSGTTGNPKGATLSHHNIVNNSNLIGQRLKMPAKTAEELRMVLPCPLYHCLGSVGGTMVSVVHGATLLLSSPSFNGKKALEAISREKGTLLYGTPTMFVDILNQPDFSSYDFTTIRGGVIAGSLAPPELIRAIISKMNMKELVVVYGTTENSPVTFMNFPEDTLEQKAGSVGRIMPHTEAQIVNMETGELTKLNMPGELCIRGYCVMQGYWGEPQKTFETVGQDRWYRTGDIASMDEQGFCRIVGRSKDMIIRGGENIYPAELEDFFHKHPQVQEAQVVGVKDDRMGEEICACIRLKSGETTTEEEIKAFCKGKISHFKIPRYIVFVEGYPLTVSGKIQKFKLREQMEQHLKL.

A mitochondrion-targeting transit peptide spans 1-49 (MAVYLGMLRLGRLCVASLGARGPRTPLSRPWPNSKLQGVRAFSSGMVDC). Lys-179 bears the N6-acetyllysine mark. N6-acetyllysine; alternate is present on Lys-182. Lys-182 carries the post-translational modification N6-succinyllysine; alternate. Lys-199 carries the N6-acetyllysine modification. Residue 263 to 271 (TSGTTGNPK) participates in ATP binding. N6-acetyllysine occurs at positions 340 and 398. N6-succinyllysine is present on Lys-478. 2 residues coordinate ATP: Asp-493 and Arg-508. N6-acetyllysine is present on Lys-510. Residues Lys-544 and Lys-570 each carry the N6-acetyllysine; alternate modification. N6-succinyllysine; alternate occurs at positions 544 and 570. Lys-599 contributes to the ATP binding site. Lys-599 bears the N6-succinyllysine mark.

This sequence belongs to the ATP-dependent AMP-binding enzyme family.

The protein localises to the mitochondrion. The catalysed reaction is a medium-chain fatty acid + ATP + CoA = a medium-chain fatty acyl-CoA + AMP + diphosphate. It catalyses the reaction octanoate + ATP + CoA = octanoyl-CoA + AMP + diphosphate. Acyl-CoA synthases catalyze the initial reaction in fatty acid metabolism, by forming a thioester with CoA. Has some preference toward medium-chain substrates. Plays a role in adipocyte differentiation. This Rattus norvegicus (Rat) protein is Medium-chain acyl-CoA ligase ACSF2, mitochondrial.